Consider the following 275-residue polypeptide: Elongation factor Ts (275 aa).

An involved in Mg(2+) ion dislocation from EF-Tu region spans residues 76 to 79 (TDFV).

It belongs to the EF-Ts family.

It localises to the cytoplasm. Its function is as follows. Associates with the EF-Tu.GDP complex and induces the exchange of GDP to GTP. It remains bound to the aminoacyl-tRNA.EF-Tu.GTP complex up to the GTP hydrolysis stage on the ribosome. The protein is Elongation factor Ts of Nocardia farcinica (strain IFM 10152).